The following is a 240-amino-acid chain: Phosphoribosylaminoimidazole-succinocarboxamide synthase (240 aa).

Belongs to the SAICAR synthetase family.

It carries out the reaction 5-amino-1-(5-phospho-D-ribosyl)imidazole-4-carboxylate + L-aspartate + ATP = (2S)-2-[5-amino-1-(5-phospho-beta-D-ribosyl)imidazole-4-carboxamido]succinate + ADP + phosphate + 2 H(+). It participates in purine metabolism; IMP biosynthesis via de novo pathway; 5-amino-1-(5-phospho-D-ribosyl)imidazole-4-carboxamide from 5-amino-1-(5-phospho-D-ribosyl)imidazole-4-carboxylate: step 1/2. This chain is Phosphoribosylaminoimidazole-succinocarboxamide synthase, found in Wolbachia sp. subsp. Brugia malayi (strain TRS).